The primary structure comprises 831 residues: DNA ligase (831 aa).

Residues 34-38, 83-84, and E114 contribute to the NAD(+) site; these read DADYD and SL. K116 functions as the N6-AMP-lysine intermediate in the catalytic mechanism. NAD(+)-binding residues include R137, E174, K291, and K315. Zn(2+)-binding residues include C409, C412, C427, and C433. In terms of domain architecture, BRCT spans 749–831; that stretch reads AHTAPLNGQS…LAFLGQYSAQ (83 aa).

Belongs to the NAD-dependent DNA ligase family. LigA subfamily. The cofactor is Mg(2+). Mn(2+) serves as cofactor.

The catalysed reaction is NAD(+) + (deoxyribonucleotide)n-3'-hydroxyl + 5'-phospho-(deoxyribonucleotide)m = (deoxyribonucleotide)n+m + AMP + beta-nicotinamide D-nucleotide.. DNA ligase that catalyzes the formation of phosphodiester linkages between 5'-phosphoryl and 3'-hydroxyl groups in double-stranded DNA using NAD as a coenzyme and as the energy source for the reaction. It is essential for DNA replication and repair of damaged DNA. The sequence is that of DNA ligase from Xylella fastidiosa (strain 9a5c).